The sequence spans 140 residues: Probable transport accessory protein MmpS4 (140 aa).

A helical membrane pass occupies residues 2–22 (LMRTWIPLVILVVVIVGGFTV).

Belongs to the MmpS family.

The protein localises to the cell membrane. This is Probable transport accessory protein MmpS4 (mmpS4) from Mycobacterium bovis (strain ATCC BAA-935 / AF2122/97).